The chain runs to 121 residues: Large ribosomal subunit protein bL12 (121 aa).

This sequence belongs to the bacterial ribosomal protein bL12 family. As to quaternary structure, homodimer. Part of the ribosomal stalk of the 50S ribosomal subunit. Forms a multimeric L10(L12)X complex, where L10 forms an elongated spine to which 2 to 4 L12 dimers bind in a sequential fashion. Binds GTP-bound translation factors.

Functionally, forms part of the ribosomal stalk which helps the ribosome interact with GTP-bound translation factors. Is thus essential for accurate translation. This chain is Large ribosomal subunit protein bL12, found in Bacillus pumilus (strain SAFR-032).